We begin with the raw amino-acid sequence, 274 residues long: Large ribosomal subunit protein uL2cy (274 aa).

Disordered stretches follow at residues 1–20 (MAIH…AVDS) and 224–274 (NPVD…RRSK).

Belongs to the universal ribosomal protein uL2 family. Part of the 50S ribosomal subunit.

It localises to the plastid. It is found in the chloroplast. This is Large ribosomal subunit protein uL2cy (rpl2-B) from Populus alba (White poplar).